The following is a 132-amino-acid chain: Small ribosomal subunit protein uS8 (132 aa).

The protein belongs to the universal ribosomal protein uS8 family. Part of the 30S ribosomal subunit. Contacts proteins S5 and S12.

Its function is as follows. One of the primary rRNA binding proteins, it binds directly to 16S rRNA central domain where it helps coordinate assembly of the platform of the 30S subunit. The protein is Small ribosomal subunit protein uS8 of Mycoplasmopsis pulmonis (strain UAB CTIP) (Mycoplasma pulmonis).